The chain runs to 476 residues: Glycogen synthase (476 aa).

Residue Lys-15 coordinates ADP-alpha-D-glucose.

Belongs to the glycosyltransferase 1 family. Bacterial/plant glycogen synthase subfamily.

The catalysed reaction is [(1-&gt;4)-alpha-D-glucosyl](n) + ADP-alpha-D-glucose = [(1-&gt;4)-alpha-D-glucosyl](n+1) + ADP + H(+). Its pathway is glycan biosynthesis; glycogen biosynthesis. In terms of biological role, synthesizes alpha-1,4-glucan chains using ADP-glucose. The protein is Glycogen synthase of Bacillus cereus (strain ATCC 14579 / DSM 31 / CCUG 7414 / JCM 2152 / NBRC 15305 / NCIMB 9373 / NCTC 2599 / NRRL B-3711).